Here is a 93-residue protein sequence, read N- to C-terminus: Translation initiation factor IF-1 (93 aa).

Positions 1–72 constitute an S1-like domain; sequence MAKEELIQFE…EKGRLIFRHK (72 aa). The interval 69–93 is disordered; it reads FRHKDERPSGAPRGGPPRGGQFRRR.

This sequence belongs to the IF-1 family. As to quaternary structure, component of the 30S ribosomal translation pre-initiation complex which assembles on the 30S ribosome in the order IF-2 and IF-3, IF-1 and N-formylmethionyl-tRNA(fMet); mRNA recruitment can occur at any time during PIC assembly.

The protein resides in the cytoplasm. Its function is as follows. One of the essential components for the initiation of protein synthesis. Stabilizes the binding of IF-2 and IF-3 on the 30S subunit to which N-formylmethionyl-tRNA(fMet) subsequently binds. Helps modulate mRNA selection, yielding the 30S pre-initiation complex (PIC). Upon addition of the 50S ribosomal subunit IF-1, IF-2 and IF-3 are released leaving the mature 70S translation initiation complex. This Nitrobacter hamburgensis (strain DSM 10229 / NCIMB 13809 / X14) protein is Translation initiation factor IF-1.